The primary structure comprises 247 residues: Proteasome subunit alpha (247 aa).

Belongs to the peptidase T1A family. In terms of assembly, the 20S proteasome core is composed of 14 alpha and 14 beta subunits that assemble into four stacked heptameric rings, resulting in a barrel-shaped structure. The two inner rings, each composed of seven catalytic beta subunits, are sandwiched by two outer rings, each composed of seven alpha subunits. The catalytic chamber with the active sites is on the inside of the barrel. Has a gated structure, the ends of the cylinder being occluded by the N-termini of the alpha-subunits. Is capped at one or both ends by the proteasome regulatory ATPase, PAN.

It is found in the cytoplasm. With respect to regulation, the formation of the proteasomal ATPase PAN-20S proteasome complex, via the docking of the C-termini of PAN into the intersubunit pockets in the alpha-rings, triggers opening of the gate for substrate entry. Interconversion between the open-gate and close-gate conformations leads to a dynamic regulation of the 20S proteasome proteolysis activity. In terms of biological role, component of the proteasome core, a large protease complex with broad specificity involved in protein degradation. This Methanosarcina thermophila protein is Proteasome subunit alpha.